Reading from the N-terminus, the 57-residue chain is UPF0391 membrane protein RB0084 (57 aa).

The next 2 helical transmembrane spans lie at Trp-4 to Ser-24 and Ile-33 to Gly-53.

It belongs to the UPF0391 family.

It localises to the cell membrane. The polypeptide is UPF0391 membrane protein RB0084 (Rhizobium meliloti (strain 1021) (Ensifer meliloti)).